The chain runs to 218 residues: Pyridoxine/pyridoxamine 5'-phosphate oxidase (218 aa).

Substrate contacts are provided by residues 14-17 (RREY) and Lys72. FMN is bound by residues 67 to 72 (RIVLLK), 82 to 83 (YT), Arg88, Lys89, and Gln111. Substrate-binding residues include Tyr129, Arg133, and Ser137. FMN is bound by residues 146–147 (QS) and Trp191. Position 197–199 (197–199 (RLH)) interacts with substrate. An FMN-binding site is contributed by Arg201.

Belongs to the pyridoxamine 5'-phosphate oxidase family. Homodimer. Requires FMN as cofactor.

The catalysed reaction is pyridoxamine 5'-phosphate + O2 + H2O = pyridoxal 5'-phosphate + H2O2 + NH4(+). It carries out the reaction pyridoxine 5'-phosphate + O2 = pyridoxal 5'-phosphate + H2O2. Its pathway is cofactor metabolism; pyridoxal 5'-phosphate salvage; pyridoxal 5'-phosphate from pyridoxamine 5'-phosphate: step 1/1. The protein operates within cofactor metabolism; pyridoxal 5'-phosphate salvage; pyridoxal 5'-phosphate from pyridoxine 5'-phosphate: step 1/1. Its function is as follows. Catalyzes the oxidation of either pyridoxine 5'-phosphate (PNP) or pyridoxamine 5'-phosphate (PMP) into pyridoxal 5'-phosphate (PLP). The protein is Pyridoxine/pyridoxamine 5'-phosphate oxidase of Escherichia coli O157:H7.